The following is an 83-amino-acid chain: Translation initiation factor IF-1 (83 aa).

The 72-residue stretch at 1–72 (MAKEELIEMQ…SKGRITFRHL (72 aa)) folds into the S1-like domain.

Belongs to the IF-1 family. Component of the 30S ribosomal translation pre-initiation complex which assembles on the 30S ribosome in the order IF-2 and IF-3, IF-1 and N-formylmethionyl-tRNA(fMet); mRNA recruitment can occur at any time during PIC assembly.

The protein localises to the cytoplasm. In terms of biological role, one of the essential components for the initiation of protein synthesis. Stabilizes the binding of IF-2 and IF-3 on the 30S subunit to which N-formylmethionyl-tRNA(fMet) subsequently binds. Helps modulate mRNA selection, yielding the 30S pre-initiation complex (PIC). Upon addition of the 50S ribosomal subunit IF-1, IF-2 and IF-3 are released leaving the mature 70S translation initiation complex. The sequence is that of Translation initiation factor IF-1 from Verminephrobacter eiseniae (strain EF01-2).